A 175-amino-acid polypeptide reads, in one-letter code: Protein-export protein SecB (175 aa).

The disordered stretch occupies residues 154 to 175; the sequence is QQGGNNNGSDSGIILPPGTTRQ.

This sequence belongs to the SecB family. In terms of assembly, homotetramer, a dimer of dimers. One homotetramer interacts with 1 SecA dimer.

The protein localises to the cytoplasm. Its function is as follows. One of the proteins required for the normal export of preproteins out of the cell cytoplasm. It is a molecular chaperone that binds to a subset of precursor proteins, maintaining them in a translocation-competent state. It also specifically binds to its receptor SecA. This is Protein-export protein SecB from Bordetella petrii (strain ATCC BAA-461 / DSM 12804 / CCUG 43448).